A 49-amino-acid chain; its full sequence is Fungus-induced-related protein 16 (49 aa).

This chain is Fungus-induced-related protein 16 (fipr-16), found in Caenorhabditis elegans.